The primary structure comprises 71 residues: Conotoxin LvVIIB (71 aa).

The N-terminal stretch at 1–17 (VLIIAVLFLAASELVTA) is a signal peptide. Positions 18–42 (DYTRDEWQYRAASLRDAMRNFRDTR) are excised as a propeptide. Disulfide bonds link Cys43–Cys57, Cys50–Cys62, and Cys56–Cys69.

Belongs to the conotoxin O1 superfamily. In terms of tissue distribution, expressed by the venom duct.

It localises to the secreted. The protein is Conotoxin LvVIIB of Conus lividus (Livid cone).